The primary structure comprises 182 residues: Histone deacetylase complex subunit SAP30L (182 aa).

An N-acetylmethionine modification is found at Met1. A compositionally biased stretch (acidic residues) spans 1-10 (MNGFSTEEDS). A disordered region spans residues 1-22 (MNGFSTEEDSREGPPAAPAAAP). Intrachain disulfides connect Cys28/Cys29 and Cys37/Cys73. An Atypical zinc finger spans residues 28 to 76 (CCLIADGERCVRPAGNASFSKRVQKSISQKKLKLDIDKSVRHLYICDFH). A Glycyl lysine isopeptide (Lys-Gly) (interchain with G-Cter in SUMO2) cross-link involves residue Lys48. Residues 84–103 (RNKRKRKASDDGGDSPEHDA) are disordered. The short motif at 85-90 (NKRKRK) is the Nuclear localization signal (NLS) element. Positions 87–89 (RKR) are important for DNA and phosphoinositide binding. Phosphoserine occurs at positions 92 and 98. Glycyl lysine isopeptide (Lys-Gly) (interchain with G-Cter in SUMO2) cross-links involve residues Lys154, Lys165, and Lys174.

This sequence belongs to the SAP30 family. Interacts with components of the histone deacetylase complex SIN3A, HDAC1 and HDAC2. Binds histones and nucleosomes. Interacts with FEZ1.

It is found in the nucleus. The protein localises to the nucleolus. Functionally, functions as a transcription repressor, probably via its interaction with histone deacetylase complexes. Involved in the functional recruitment of the class 1 Sin3-histone deacetylase complex (HDAC) to the nucleolus. Binds DNA, apparently without sequence-specificity, and bends bound double-stranded DNA. Binds phosphoinositol phosphates (phosphoinositol 3-phosphate, phosphoinositol 4-phosphate and phosphoinositol 5-phosphate) via the same basic sequence motif that mediates DNA binding and nuclear import. In Mus musculus (Mouse), this protein is Histone deacetylase complex subunit SAP30L (Sap30l).